The primary structure comprises 305 residues: tRNA pseudouridine synthase B (305 aa).

The Nucleophile role is filled by Asp-41.

The protein belongs to the pseudouridine synthase TruB family. Type 1 subfamily.

The enzyme catalyses uridine(55) in tRNA = pseudouridine(55) in tRNA. Functionally, responsible for synthesis of pseudouridine from uracil-55 in the psi GC loop of transfer RNAs. The polypeptide is tRNA pseudouridine synthase B (Prochlorococcus marinus (strain MIT 9515)).